The sequence spans 2057 residues: Rho guanine nucleotide exchange factor 17 (2057 aa).

3 disordered regions span residues 20 to 361 (ERWS…DTGG), 375 to 461 (LASP…SNPD), and 481 to 559 (RVRK…LKPS). A phosphoserine mark is found at Ser-142 and Ser-152. The segment covering 227–249 (ARASSSSSIASSYPVSRSRAASS) has biased composition (low complexity). Phosphoserine occurs at positions 305 and 308. Residues 314 to 323 (GGLGSAGGVG) show a composition bias toward gly residues. Ser-324, Ser-330, Ser-377, Ser-381, Ser-389, Ser-404, and Ser-414 each carry phosphoserine. The span at 382-391 (RGSSRYSSTE) shows a compositional bias: polar residues. Over residues 440–451 (PLRDGGLDLDKN) the composition is skewed to basic and acidic residues. Phosphoserine is present on Ser-456. Residues 507–524 (EQSESTLSQSPTSPTTRP) are compositionally biased toward low complexity. 2 positions are modified to phosphoserine: Ser-538 and Ser-611. 2 disordered regions span residues 615–647 (AGDM…PEPL) and 663–952 (LSST…VRHA). Over residues 663–672 (LSSTSAQTNH) the composition is skewed to polar residues. The residue at position 689 (Ser-689) is a Phosphoserine. 2 positions are modified to phosphothreonine: Thr-692 and Thr-695. Over residues 710–719 (PNGTELSNGE) the composition is skewed to polar residues. At Ser-728 the chain carries Phosphoserine. Residues 747-760 (SVDSNLLGSLNSKT) show a composition bias toward polar residues. Positions 820-829 (SLSDPSRRGE) are enriched in basic and acidic residues. Residue Ser-906 is modified to Phosphoserine. Positions 909–920 (LTRRGSKKRPAR) are enriched in basic residues. Over residues 922–931 (SHQELRREEG) the composition is skewed to basic and acidic residues. The segment covering 933–944 (QDQTGSLTQTRS) has biased composition (polar residues). Residues Ser-953 and Ser-994 each carry the phosphoserine modification. Residues 1015–1027 (GPVDLPCLPPSAP) are compositionally biased toward pro residues. The tract at residues 1015 to 1054 (GPVDLPCLPPSAPPSTETKPSGAARATPDEPAPASKCCSK) is disordered. The DH domain occupies 1059-1247 (MRKHVTMTLL…KQVAERINKG (189 aa)). Position 1324 is a phosphoserine (Ser-1324). Disordered stretches follow at residues 1555-1713 (RCPR…SSRG) and 1983-2050 (CSTP…DSTN). The segment covering 1579–1589 (LDVEATAEEEA) has biased composition (acidic residues). A compositionally biased stretch (low complexity) spans 1638 to 1674 (SPSPSGTLQSQASQSTISSSFGNEETPSSKEATAETT).

Acts as a guanine nucleotide exchange factor (GEF) for RhoA GTPases. The chain is Rho guanine nucleotide exchange factor 17 (Arhgef17) from Mus musculus (Mouse).